The following is an 808-amino-acid chain: Sucrose synthase 1 (808 aa).

The segment at 277–754 (MVFNVVILSP…GLQRIEEKYT (478 aa)) is GT-B glycosyltransferase.

It belongs to the glycosyltransferase 1 family. Plant sucrose synthase subfamily. As to quaternary structure, homotetramer. Expressed in the phloem of leaves and in roots. Detected in the whole plant but more precisely confined to the vasculature in cotyledons, mature leaves and siliques.

The catalysed reaction is an NDP-alpha-D-glucose + D-fructose = a ribonucleoside 5'-diphosphate + sucrose + H(+). Its function is as follows. Sucrose-cleaving enzyme that provides UDP-glucose and fructose for various metabolic pathways. The protein is Sucrose synthase 1 (SUS1) of Arabidopsis thaliana (Mouse-ear cress).